A 244-amino-acid chain; its full sequence is Flagellar L-ring protein (244 aa).

The N-terminal stretch at 1 to 18 (MNMRVFIFLIFAAASVSA) is a signal peptide. C19 is lipidated: N-palmitoyl cysteine. A lipid anchor (S-diacylglycerol cysteine) is attached at C19.

The protein belongs to the FlgH family. As to quaternary structure, the basal body constitutes a major portion of the flagellar organelle and consists of four rings (L,P,S, and M) mounted on a central rod.

It localises to the cell outer membrane. It is found in the bacterial flagellum basal body. Its function is as follows. Assembles around the rod to form the L-ring and probably protects the motor/basal body from shearing forces during rotation. The chain is Flagellar L-ring protein from Jannaschia sp. (strain CCS1).